We begin with the raw amino-acid sequence, 275 residues long: Formamidopyrimidine-DNA glycosylase (275 aa).

The active-site Schiff-base intermediate with DNA is P2. The active-site Proton donor is the E3. Residue K58 is the Proton donor; for beta-elimination activity of the active site. Residues H91, R109, and R154 each coordinate DNA. The FPG-type zinc finger occupies 240-274 (AVYERAGLPCRVCGAPIRRLVQGQRATYFCPSCQK). Catalysis depends on R264, which acts as the Proton donor; for delta-elimination activity.

This sequence belongs to the FPG family. As to quaternary structure, monomer. The cofactor is Zn(2+).

The catalysed reaction is Hydrolysis of DNA containing ring-opened 7-methylguanine residues, releasing 2,6-diamino-4-hydroxy-5-(N-methyl)formamidopyrimidine.. It catalyses the reaction 2'-deoxyribonucleotide-(2'-deoxyribose 5'-phosphate)-2'-deoxyribonucleotide-DNA = a 3'-end 2'-deoxyribonucleotide-(2,3-dehydro-2,3-deoxyribose 5'-phosphate)-DNA + a 5'-end 5'-phospho-2'-deoxyribonucleoside-DNA + H(+). Involved in base excision repair of DNA damaged by oxidation or by mutagenic agents. Acts as a DNA glycosylase that recognizes and removes damaged bases. Has a preference for oxidized purines, such as 7,8-dihydro-8-oxoguanine (8-oxoG). Has AP (apurinic/apyrimidinic) lyase activity and introduces nicks in the DNA strand. Cleaves the DNA backbone by beta-delta elimination to generate a single-strand break at the site of the removed base with both 3'- and 5'-phosphates. This chain is Formamidopyrimidine-DNA glycosylase, found in Bordetella parapertussis (strain 12822 / ATCC BAA-587 / NCTC 13253).